We begin with the raw amino-acid sequence, 475 residues long: FAD-dependent monooxygenase penE (475 aa).

Positions 35, 49, and 108 each coordinate FAD. Residue tyrosine 216 is part of the active site. FAD-binding residues include aspartate 308 and alanine 321. N-linked (GlcNAc...) asparagine glycosylation is present at asparagine 437. The chain crosses the membrane as a helical span at residues 446–466; the sequence is WGSIWLSPVILCLFCMLFLWP.

The protein belongs to the paxM FAD-dependent monooxygenase family. The cofactor is FAD.

Its subcellular location is the membrane. It carries out the reaction [(1'E)-3'-hydroxy-3',7'-dimethylocta-1',6'-dien-1'-yl]-quinolinone B + NADPH + O2 + H(+) = [(1'E)-5'-(3',3'-dimethyloxiran-2'-yl)-3'-hydroxy-3'-methylpent-1'-en-1'-yl]-quinolinone B + NADP(+) + H2O. It participates in secondary metabolite biosynthesis. Its pathway is alkaloid biosynthesis. It functions in the pathway mycotoxin biosynthesis. Its function is as follows. FAD-dependent monooxygenase; part of the gene cluster that mediates the biosynthesis of penigequinolones, potent insecticidal alkaloids that contain a highly modified 10-carbon prenyl group. The first stage is catalyzed by the nonribosomal peptide synthetase penN that condenses anthranilic acid and O-methyl-L-tyrosine to produce 4'-methoxycyclopeptin. 4'-methoxycyclopeptin is then converted to 4'-methoxydehydrocyclopeptin by the ketoglutarate-dependent dioxygenase penM through dehydrogenation to form a double bond between C-alpha and C-beta of the O-methyltyrosine side chain. PenM also converts its first product methoxydehydrocyclopeptin to 4'-methoxycyclopenin. The following conversion of 4'methoxycyclopenin into 4'-methoxyviridicatin is catalyzed by the cyclopenase penL. 4'-methoxyviridicatin is the precursor of quinolone natural products, and is further converted to quinolinone B. The prenyltransferase penI then catalyzes the canonical Friedel-Crafts alkylation of quinolinone B with dimethylallyl cation to yield dimethylallyl quinolone, which is subjected to FAD-dependent dehydrogenation by the FAD-linked oxidoreductase penH to yield conjugated aryl diene. The delta(3') double bond then serves as the site of the second alkylation with DMAPP catalyzed by the prenyltransferase penG to yield a carbenium ion intermediate, which can be attacked by H(2)O to yield a styrenyl quinolone containing a C3'-hydroxyprenyl chain, or undergo cyclization to yield yaequinolones J1 and J2. The conversion of the styrenyl quinolone into the tetrahydrofuran-containing yaequinolone C is performed by the FAD-dependent monooxygenase penE and involves epoxidation of the terminal C7'-C8' olefin, followed by epoxide ring opening initiated by the C3' hydroxyl group. The predicted cysteine hydrolase penJ acts as an epoxide hydrolase that enhances the rate of the 5-exo-tet cyclization step, increasing the yield of yaequinolone C. PenF catalyzes the cationic rearrangement of the epoxide formed by penE (before ring opening to produce yaequinolone C) into yaequinolone D. Finally, the short-chain dehydrogenase/reductase (SDR)-like reductase penD, catalyzes both the dehydration of yaequinolone D and the reduction of the resulting oxonium to yield penigequinolone. This chain is FAD-dependent monooxygenase penE, found in Penicillium thymicola.